A 62-amino-acid polypeptide reads, in one-letter code: Photosystem II reaction center protein Z (62 aa).

2 consecutive transmembrane segments (helical) span residues threonine 8 to alanine 28 and phenylalanine 41 to valine 61.

It belongs to the PsbZ family. PSII is composed of 1 copy each of membrane proteins PsbA, PsbB, PsbC, PsbD, PsbE, PsbF, PsbH, PsbI, PsbJ, PsbK, PsbL, PsbM, PsbT, PsbY, PsbZ, Psb30/Ycf12, at least 3 peripheral proteins of the oxygen-evolving complex and a large number of cofactors. It forms dimeric complexes.

It localises to the plastid. The protein localises to the chloroplast thylakoid membrane. May control the interaction of photosystem II (PSII) cores with the light-harvesting antenna, regulates electron flow through the 2 photosystem reaction centers. PSII is a light-driven water plastoquinone oxidoreductase, using light energy to abstract electrons from H(2)O, generating a proton gradient subsequently used for ATP formation. The polypeptide is Photosystem II reaction center protein Z (Ostreococcus tauri).